A 622-amino-acid chain; its full sequence is Polyamine transporter 3 (622 aa).

Positions 1–47 (MNRQESINSFNSDETSSLSDVESQQPQQYIPSESGSKSNMAPNQLKL) are enriched in polar residues. The interval 1-76 (MNRQESINSF…VPDVNAPQSS (76 aa)) is disordered. The Cytoplasmic segment spans residues 1 to 182 (MNRQESINSF…WPAWIRWSYT (182 aa)). Ser-55 carries the post-translational modification Phosphoserine. Thr-98 bears the Phosphothreonine mark. Phosphoserine is present on residues Ser-101 and Ser-132. The tract at residues 105–152 (TSTAISRTRTRQIDGASSPSSNEDALESDNNEKGKEGDSSGANDEAPD) is disordered. Residues 183-203 (VLLSILVICVAYGSACISGGL) traverse the membrane as a helical segment. Over 204–215 (GTVEKKYHVGME) the chain is Extracellular. The chain crosses the membrane as a helical span at residues 216-236 (AAILSVSLMVIGFSLGPLIWS). Topologically, residues 237–245 (PVSDLYGRR) are cytoplasmic. A helical membrane pass occupies residues 246–266 (VAYFVSMGLYVIFNIPCALAP). At 267–275 (NLGSLLACR) the chain is on the extracellular side. A helical transmembrane segment spans residues 276–296 (FLCGVWSSSGLCLVGGSIADM). Topologically, residues 297–305 (FPSETRGKA) are cytoplasmic. A helical transmembrane segment spans residues 306–326 (IAFFAFAPYVGPVVGPLVNGF). Residues 327–335 (ISVSTGRMD) lie on the Extracellular side of the membrane. A helical membrane pass occupies residues 336–356 (LIFWVNMAFAGVMWIISSAIP). Topologically, residues 357–416 (ETYAPVILKRKAARLRKETGNPKIMTEQEAQGVSMGEMMRACLLRPLYFSVTEPVLVATC) are cytoplasmic. A helical membrane pass occupies residues 417–437 (FYVCLIYSLLYAFFFAFPVIF). The Extracellular portion of the chain corresponds to 438-446 (GELYGYKDN). The helical transmembrane segment at 447 to 467 (LVGLMFIPIVIGALWALATTF) threads the bilayer. Topologically, residues 468-487 (YCENKYLQIVKQRKPTPEDR) are cytoplasmic. The chain crosses the membrane as a helical span at residues 488 to 508 (LLGAKIGAPFAAIALWILGAT). The Extracellular portion of the chain corresponds to 509-512 (AYKH). A helical membrane pass occupies residues 513–533 (IIWVGPASAGLAFGFGMVLIY). At 534-550 (YSLNNYIIDCYVQYASS) the chain is on the cytoplasmic side. Residues 551 to 571 (ALATKVFLRSAGGAAFPLFTI) traverse the membrane as a helical segment. The Extracellular segment spans residues 572 to 583 (QMYHKLNLHWGS). A helical membrane pass occupies residues 584–604 (WLLAFISTAMIALPFAFSYWG). The Cytoplasmic segment spans residues 605–622 (KGLRHKLSKKDYSIDSIE).

Belongs to the major facilitator superfamily. DHA1 family. Polyamines/proton antiporter (TC 2.A.1.2.16) subfamily.

It is found in the cell membrane. Its function is as follows. Cell membrane polyamine/proton antiporter, involved in the detoxification of excess polyamines in the cytoplasm. Recognizes spermine, but not spermidine. This chain is Polyamine transporter 3 (TPO3), found in Saccharomyces cerevisiae (strain ATCC 204508 / S288c) (Baker's yeast).